We begin with the raw amino-acid sequence, 193 residues long: Rho-related protein racF2 (193 aa).

10-17 (GDGAVGKT) lines the GTP pocket. The Effector region signature appears at 32-40 (YLPTVFDNY). GTP-binding positions include 57–61 (DTAGQ) and 115–118 (TKQD). Cys190 is subject to Cysteine methyl ester. Cys190 carries the S-geranylgeranyl cysteine lipid modification. Residues 191–193 (TIM) constitute a propeptide, removed in mature form.

It belongs to the small GTPase superfamily. Rho family.

The protein localises to the cell membrane. The chain is Rho-related protein racF2 (racF2) from Dictyostelium discoideum (Social amoeba).